Here is a 148-residue protein sequence, read N- to C-terminus: Suppressor APC domain-containing protein 1 (148 aa).

Positions 120–148 (SRQQKGVTQPKEEMAQRGCTKGPRGPTRV) are disordered.

In Homo sapiens (Human), this protein is Suppressor APC domain-containing protein 1 (SAPCD1).